The primary structure comprises 461 residues: Phosphoenolpyruvate carboxylase (461 aa).

It belongs to the PEPCase type 2 family. As to quaternary structure, homotetramer. Mg(2+) is required as a cofactor.

It catalyses the reaction oxaloacetate + phosphate = phosphoenolpyruvate + hydrogencarbonate. Functionally, catalyzes the irreversible beta-carboxylation of phosphoenolpyruvate (PEP) to form oxaloacetate (OAA), a four-carbon dicarboxylic acid source for the tricarboxylic acid cycle. The sequence is that of Phosphoenolpyruvate carboxylase from Pyrobaculum islandicum (strain DSM 4184 / JCM 9189 / GEO3).